The sequence spans 90 residues: Large ribosomal subunit protein eL34 (90 aa).

The segment at alanine 38–proline 65 is disordered. The segment covering arginine 51 to alanine 62 has biased composition (basic residues).

The protein belongs to the eukaryotic ribosomal protein eL34 family.

In Aeropyrum pernix (strain ATCC 700893 / DSM 11879 / JCM 9820 / NBRC 100138 / K1), this protein is Large ribosomal subunit protein eL34 (rpl34e).